Reading from the N-terminus, the 902-residue chain is Glycogen phosphorylase (902 aa).

Residues 1 to 21 (MPPASTSTTNDMITEEPTSPH) are disordered. Thr-31 carries the phosphothreonine modification. A Phosphoserine modification is found at Ser-333. The residue at position 751 (Lys-751) is an N6-(pyridoxal phosphate)lysine.

It belongs to the glycogen phosphorylase family. As to quaternary structure, homodimer. The cofactor is pyridoxal 5'-phosphate.

It localises to the cytoplasm. Its subcellular location is the cytosol. It carries out the reaction [(1-&gt;4)-alpha-D-glucosyl](n) + phosphate = [(1-&gt;4)-alpha-D-glucosyl](n-1) + alpha-D-glucose 1-phosphate. Activated by phosphorylation of Thr-31. In terms of biological role, phosphorylase is an important allosteric enzyme in carbohydrate metabolism. Enzymes from different sources differ in their regulatory mechanisms and in their natural substrates. However, all known phosphorylases share catalytic and structural properties. This chain is Glycogen phosphorylase (GPH1), found in Saccharomyces cerevisiae (strain ATCC 204508 / S288c) (Baker's yeast).